Reading from the N-terminus, the 349-residue chain is Protein RecA (349 aa).

Residue 65 to 72 coordinates ATP; the sequence is GPESSGKT.

The protein belongs to the RecA family.

It is found in the cytoplasm. Its function is as follows. Can catalyze the hydrolysis of ATP in the presence of single-stranded DNA, the ATP-dependent uptake of single-stranded DNA by duplex DNA, and the ATP-dependent hybridization of homologous single-stranded DNAs. It interacts with LexA causing its activation and leading to its autocatalytic cleavage. This is Protein RecA from Azotobacter vinelandii.